The sequence spans 392 residues: MGEKKEETATKPQGEKKPTDGGITTVVMKLDMHCEGCGKKIKRIFKHFKGVEDVKIDYKSNKLTVIGNVDPVEVRDKVADKIKRPVELVSTVAPPKKETPPSSGGAEKKPSPAAEEKPAEKKPAAVEKPGEKKEEKKKEEGEKKASPPPPPKESTVVLKTKLHCEGCEHKIKRIVNKIKGVNSVAIDSAKDLVIVKGIIDVKQLTPYLNEKLKRTVEVVPAKKDDGAPVAAAAAAPAGGEKKDKVAGEKKEIKDVGEKKVDGGGEKKKEVAVGGGGGGGGGGGDGGAMDVKKSEYNGYGYPPQPMYYYPEGQVYGQQHYMMQGQSSQSYVQEPYSNQGYVQESYMNQGYGQGYGQEAPPPPYMNQQGYADPYGHMRAPELFSDENPNGCSVM.

A compositionally biased stretch (basic and acidic residues) spans 1-19 (MGEKKEETATKPQGEKKPT). Residues 1 to 22 (MGEKKEETATKPQGEKKPTDGG) are disordered. The HMA 1 domain maps to 23 to 86 (ITTVVMKLDM…KVADKIKRPV (64 aa)). Cd(2+)-binding residues include Cys-34 and Cys-37. Residues 89–157 (VSTVAPPKKE…PPPPKESTVV (69 aa)) are disordered. A compositionally biased stretch (basic and acidic residues) spans 106-145 (AEKKPSPAAEEKPAEKKPAAVEKPGEKKEEKKKEEGEKKA). One can recognise an HMA 2 domain in the interval 153-216 (ESTVVLKTKL…YLNEKLKRTV (64 aa)). Residues Cys-164 and Cys-167 each coordinate Cd(2+). Basic and acidic residues predominate over residues 258 to 270 (KKVDGGGEKKKEV). 2 disordered regions span residues 258-285 (KKVD…GGDG) and 350-392 (GQGY…CSVM). The segment covering 272–285 (VGGGGGGGGGGGDG) has biased composition (gly residues). Cys-389 bears the Cysteine methyl ester mark. A lipid anchor (S-farnesyl cysteine) is attached at Cys-389. A propeptide spans 390–392 (SVM) (removed in mature form).

This sequence belongs to the HIPP family. In terms of tissue distribution, expressed in petioles, hypocotyls, peduncles, vascular bundles and root meristems.

Its subcellular location is the cell membrane. Its function is as follows. Heavy-metal-binding protein. Involved in the maintenance of heavy metal homeostasis and/or in detoxification. This is Heavy metal-associated isoprenylated plant protein 6 from Arabidopsis thaliana (Mouse-ear cress).